We begin with the raw amino-acid sequence, 375 residues long: 23S rRNA (uracil(747)-C(5))-methyltransferase RlmC (375 aa).

[4Fe-4S] cluster-binding residues include Cys3, Cys11, Cys14, and Cys87. Residues Gln212, Phe241, Glu262, and Asn307 each coordinate S-adenosyl-L-methionine. Cys334 (nucleophile) is an active-site residue.

This sequence belongs to the class I-like SAM-binding methyltransferase superfamily. RNA M5U methyltransferase family. RlmC subfamily.

It catalyses the reaction uridine(747) in 23S rRNA + S-adenosyl-L-methionine = 5-methyluridine(747) in 23S rRNA + S-adenosyl-L-homocysteine + H(+). In terms of biological role, catalyzes the formation of 5-methyl-uridine at position 747 (m5U747) in 23S rRNA. This is 23S rRNA (uracil(747)-C(5))-methyltransferase RlmC from Salmonella enteritidis PT4 (strain P125109).